A 266-amino-acid polypeptide reads, in one-letter code: Putative hydro-lyase Jann_2570 (266 aa).

This sequence belongs to the D-glutamate cyclase family.

The protein is Putative hydro-lyase Jann_2570 of Jannaschia sp. (strain CCS1).